Consider the following 353-residue polypeptide: Peptide chain release factor 1 (353 aa).

Q230 bears the N5-methylglutamine mark.

Belongs to the prokaryotic/mitochondrial release factor family. Post-translationally, methylated by PrmC. Methylation increases the termination efficiency of RF1.

Its subcellular location is the cytoplasm. In terms of biological role, peptide chain release factor 1 directs the termination of translation in response to the peptide chain termination codons UAG and UAA. The polypeptide is Peptide chain release factor 1 (Gluconobacter oxydans (strain 621H) (Gluconobacter suboxydans)).